The following is a 412-amino-acid chain: Serine hydroxymethyltransferase (412 aa).

(6S)-5,6,7,8-tetrahydrofolate contacts are provided by residues L117 and 121–123 (GHL). K226 bears the N6-(pyridoxal phosphate)lysine mark. 349-351 (SPF) contributes to the (6S)-5,6,7,8-tetrahydrofolate binding site.

This sequence belongs to the SHMT family. As to quaternary structure, homodimer. Pyridoxal 5'-phosphate is required as a cofactor.

Its subcellular location is the cytoplasm. It carries out the reaction (6R)-5,10-methylene-5,6,7,8-tetrahydrofolate + glycine + H2O = (6S)-5,6,7,8-tetrahydrofolate + L-serine. Its pathway is one-carbon metabolism; tetrahydrofolate interconversion. It functions in the pathway amino-acid biosynthesis; glycine biosynthesis; glycine from L-serine: step 1/1. Functionally, catalyzes the reversible interconversion of serine and glycine with tetrahydrofolate (THF) serving as the one-carbon carrier. This reaction serves as the major source of one-carbon groups required for the biosynthesis of purines, thymidylate, methionine, and other important biomolecules. Also exhibits THF-independent aldolase activity toward beta-hydroxyamino acids, producing glycine and aldehydes, via a retro-aldol mechanism. The chain is Serine hydroxymethyltransferase from Nitratidesulfovibrio vulgaris (strain ATCC 29579 / DSM 644 / CCUG 34227 / NCIMB 8303 / VKM B-1760 / Hildenborough) (Desulfovibrio vulgaris).